Here is a 188-residue protein sequence, read N- to C-terminus: Threonylcarbamoyl-AMP synthase (188 aa).

The YrdC-like domain occupies 3 to 188 (QLHPSDIKDI…RSGKILRNGQ (186 aa)).

The protein belongs to the SUA5 family. TsaC subfamily.

It is found in the cytoplasm. The enzyme catalyses L-threonine + hydrogencarbonate + ATP = L-threonylcarbamoyladenylate + diphosphate + H2O. Its function is as follows. Required for the formation of a threonylcarbamoyl group on adenosine at position 37 (t(6)A37) in tRNAs that read codons beginning with adenine. Catalyzes the conversion of L-threonine, HCO(3)(-)/CO(2) and ATP to give threonylcarbamoyl-AMP (TC-AMP) as the acyladenylate intermediate, with the release of diphosphate. The polypeptide is Threonylcarbamoyl-AMP synthase (Shewanella baltica (strain OS155 / ATCC BAA-1091)).